Here is a 442-residue protein sequence, read N- to C-terminus: Histidine--tRNA ligase (442 aa).

Belongs to the class-II aminoacyl-tRNA synthetase family. As to quaternary structure, homodimer.

Its subcellular location is the cytoplasm. The enzyme catalyses tRNA(His) + L-histidine + ATP = L-histidyl-tRNA(His) + AMP + diphosphate + H(+). The sequence is that of Histidine--tRNA ligase from Rhodopirellula baltica (strain DSM 10527 / NCIMB 13988 / SH1).